A 134-amino-acid chain; its full sequence is Large-conductance mechanosensitive channel (134 aa).

A run of 2 helical transmembrane segments spans residues 15 to 35 (IDLAIGFIIGAAFSGLVQSVV) and 80 to 100 (GNFITLLINFLIVAFVLFLAV).

This sequence belongs to the MscL family. As to quaternary structure, homopentamer.

Its subcellular location is the cell inner membrane. Functionally, channel that opens in response to stretch forces in the membrane lipid bilayer. May participate in the regulation of osmotic pressure changes within the cell. The chain is Large-conductance mechanosensitive channel from Methylocella silvestris (strain DSM 15510 / CIP 108128 / LMG 27833 / NCIMB 13906 / BL2).